Here is a 240-residue protein sequence, read N- to C-terminus: Putative cytochrome c-type biogenesis protein DbsD-like (240 aa).

A run of 6 helical transmembrane segments spans residues 32–52 (FVFF…ILPI), 74–94 (FFFC…ATLL), 104–124 (GIPV…LNIV), 149–169 (VGIG…LLIW), 176–196 (LFIG…PIII), and 218–238 (APFS…SSIL).

The protein belongs to the DsbD family.

It is found in the plastid. The protein localises to the chloroplast membrane. Functionally, could be involved in cytochrome c synthesis. This is Putative cytochrome c-type biogenesis protein DbsD-like from Porphyra purpurea (Red seaweed).